The sequence spans 247 residues: Lys-63-specific deubiquitinase BRCC36 (247 aa).

Ala-2 carries the N-acetylalanine modification. An MPN domain is found at 12–179; sequence VHLESDAFLV…YTCFQSIQAQ (168 aa). Zn(2+) contacts are provided by His-122, His-124, and Asp-135. The short motif at 122 to 135 is the JAMM motif element; the sequence is HSHPHITVWPSHVD. A Phosphoserine modification is found at Ser-189.

This sequence belongs to the peptidase M67A family. BRCC36 subfamily. Component of the ARISC complex, at least composed of UIMC1/RAP80, ABRAXAS1, BRCC3/BRCC36, BABAM2 and BABAM1/NBA1. Component of the BRCA1-A complex, at least composed of BRCA1, BARD1, UIMC1/RAP80, ABRAXAS1, BRCC3/BRCC36, BABAM2 and BABAM1/NBA1. In the BRCA1-A complex, interacts directly with ABRAXAS1 and BABAM2. Component of the BRISC complex, at least composed of ABRAXAS2, BRCC3/BRCC36, BABAM2 and BABAM1/NBA1. Identified in a complex with SHMT2 and the other subunits of the BRISC complex. In the BRISC complex, interacts directly with ABRAXAS2. Identified in a complex with ABRAXAS2 and NUMA1. The BRISC complex interacts with the CSN complex. Component of the BRCA1/BRCA2 containing complex (BRCC), which also contains BRCA1, BRCA2, BARD1, BABAM2 and RAD51. BRCC is a ubiquitin E3 ligase complex that enhances cellular survival following DNA damage. Interacts with BRCA1. Binds polyubiquitin. Interacts with PWWP2B. Interacts with HDAC1; this interaction is enhanced in the presence of PWWP2B. Requires Zn(2+) as cofactor.

It localises to the nucleus. The protein localises to the cytoplasm. It is found in the cytoskeleton. Its subcellular location is the spindle pole. Metalloprotease that specifically cleaves 'Lys-63'-linked polyubiquitin chains. Does not have activity toward 'Lys-48'-linked polyubiquitin chains. Component of the BRCA1-A complex, a complex that specifically recognizes 'Lys-63'-linked ubiquitinated histones H2A and H2AX at DNA lesions sites, leading to target the BRCA1-BARD1 heterodimer to sites of DNA damage at double-strand breaks (DSBs). In the BRCA1-A complex, it specifically removes 'Lys-63'-linked ubiquitin on histones H2A and H2AX, antagonizing the RNF8-dependent ubiquitination at double-strand breaks (DSBs). Catalytic subunit of the BRISC complex, a multiprotein complex that specifically cleaves 'Lys-63'-linked ubiquitin in various substrates. Mediates the specific 'Lys-63'-specific deubiquitination associated with the COP9 signalosome complex (CSN), via the interaction of the BRISC complex with the CSN complex. The BRISC complex is required for normal mitotic spindle assembly and microtubule attachment to kinetochores via its role in deubiquitinating NUMA1. Plays a role in interferon signaling via its role in the deubiquitination of the interferon receptor IFNAR1; deubiquitination increases IFNAR1 activity by enhancing its stability and cell surface expression. Acts as a regulator of the NLRP3 inflammasome by mediating deubiquitination of NLRP3, leading to NLRP3 inflammasome assembly. Down-regulates the response to bacterial lipopolysaccharide (LPS) via its role in IFNAR1 deubiquitination. Deubiquitinates HDAC1 and PWWP2B leading to their stabilization. The protein is Lys-63-specific deubiquitinase BRCC36 (BRCC3) of Pongo abelii (Sumatran orangutan).